A 114-amino-acid chain; its full sequence is Nucleoid-associated protein PCC8801_2554 (114 aa).

It belongs to the YbaB/EbfC family. In terms of assembly, homodimer.

Its subcellular location is the cytoplasm. The protein localises to the nucleoid. Its function is as follows. Binds to DNA and alters its conformation. May be involved in regulation of gene expression, nucleoid organization and DNA protection. The polypeptide is Nucleoid-associated protein PCC8801_2554 (Rippkaea orientalis (strain PCC 8801 / RF-1) (Cyanothece sp. (strain PCC 8801))).